We begin with the raw amino-acid sequence, 335 residues long: Methionine import ATP-binding protein MetN (335 aa).

An ABC transporter domain is found at isoleucine 2–valine 241. Residue glycine 38–serine 45 coordinates ATP.

The protein belongs to the ABC transporter superfamily. Methionine importer (TC 3.A.1.24) family. The complex is composed of two ATP-binding proteins (MetN), two transmembrane proteins (MetI) and a solute-binding protein (MetQ).

Its subcellular location is the cell inner membrane. The enzyme catalyses L-methionine(out) + ATP + H2O = L-methionine(in) + ADP + phosphate + H(+). It carries out the reaction D-methionine(out) + ATP + H2O = D-methionine(in) + ADP + phosphate + H(+). Part of the ABC transporter complex MetNIQ involved in methionine import. Responsible for energy coupling to the transport system. The sequence is that of Methionine import ATP-binding protein MetN from Xanthomonas oryzae pv. oryzae (strain KACC10331 / KXO85).